Here is an 88-residue protein sequence, read N- to C-terminus: Cell division topological specificity factor (88 aa).

The protein belongs to the MinE family.

In terms of biological role, prevents the cell division inhibition by proteins MinC and MinD at internal division sites while permitting inhibition at polar sites. This ensures cell division at the proper site by restricting the formation of a division septum at the midpoint of the long axis of the cell. This is Cell division topological specificity factor from Clostridium novyi (strain NT).